The primary structure comprises 195 residues: Transcription factor LBX2 (195 aa).

Disordered stretches follow at residues 1-89 and 164-195; these read MNSV…KSRT and PALPDSTSSPDPGPSGPDSEPNLSDEEIQVDD. The segment at residues 84 to 143 is a DNA-binding region (homeobox); it reads RRKSRTAFTAQQVLELERRFVFQKYLAPSERDGLAARLGLANAQVVTWFQNRRAKLKRDV. Acidic residues predominate over residues 186–195; that stretch reads LSDEEIQVDD.

In terms of tissue distribution, expressed in the developing urogenital system, eye and brain.

It is found in the nucleus. Its function is as follows. Transcription factor. This is Transcription factor LBX2 (Lbx2) from Mus musculus (Mouse).